A 287-amino-acid polypeptide reads, in one-letter code: Large ribosomal subunit protein uL2 (287 aa).

The disordered stretch occupies residues 221-287 (RGSVMNPCDH…SKRSRGGRDS (67 aa)). A compositionally biased stretch (basic residues) spans 258-287 (KTRKRNKPSNRFVLRKRRRVSKRSRGGRDS).

This sequence belongs to the universal ribosomal protein uL2 family. As to quaternary structure, part of the 50S ribosomal subunit. Forms a bridge to the 30S subunit in the 70S ribosome.

One of the primary rRNA binding proteins. Required for association of the 30S and 50S subunits to form the 70S ribosome, for tRNA binding and peptide bond formation. It has been suggested to have peptidyltransferase activity; this is somewhat controversial. Makes several contacts with the 16S rRNA in the 70S ribosome. The sequence is that of Large ribosomal subunit protein uL2 from Prochlorococcus marinus (strain MIT 9211).